The sequence spans 97 residues: Putative septation protein SpoVG (97 aa).

Belongs to the SpoVG family.

Functionally, could be involved in septation. In Borreliella burgdorferi (strain ATCC 35210 / DSM 4680 / CIP 102532 / B31) (Borrelia burgdorferi), this protein is Putative septation protein SpoVG.